A 578-amino-acid polypeptide reads, in one-letter code: A-type ATP synthase subunit A (578 aa).

228 to 235 (GPFGSGKT) lines the ATP pocket.

It belongs to the ATPase alpha/beta chains family. In terms of assembly, has multiple subunits with at least A(3), B(3), C, D, E, F, G, I and proteolipid K(x).

Its subcellular location is the cell membrane. The enzyme catalyses ATP + H2O + 4 H(+)(in) = ADP + phosphate + 5 H(+)(out). With respect to regulation, ATP hydrolysis stimulated by sulfite, ethanol, glycerol, magnesium and zinc ions, inhibited by diethylstilbestrol (DES) and less well by N,N-dicyclohexylcarbodiimide (DCCD). Its function is as follows. Component of the A-type ATP synthase that produces ATP from ADP in the presence of a proton gradient across the membrane. The A chain is the catalytic subunit. The sequence is that of A-type ATP synthase subunit A from Methanosarcina mazei (strain ATCC BAA-159 / DSM 3647 / Goe1 / Go1 / JCM 11833 / OCM 88) (Methanosarcina frisia).